The chain runs to 848 residues: Dynein axonemal intermediate chain 4 (848 aa).

Disordered regions lie at residues 345 to 370 and 431 to 464; these read SKANVLPKDQDQRLPGSTTEKNSETS and EPEPEEPEDVLESAKHEEVEEESKKEEEEEIHAE. Positions 359–370 are enriched in polar residues; sequence PGSTTEKNSETS. A compositionally biased stretch (basic and acidic residues) spans 442 to 456; it reads ESAKHEEVEEESKKE. WD repeat units follow at residues 534 to 574, 583 to 631, 658 to 698, 702 to 742, 745 to 784, and 790 to 829; these read QSPY…NVPV, KHLG…DCYD, SRQA…QYLD, GHKG…PSLS, PATSVVYDVAWSPKSSYIFAAANENRVEIWDLHISTLDPL, and NPGIKFTTILFAKQTDCLLVGDSDGQVSVYELRNMPTVLE.

As to quaternary structure, part of the multisubunit axonemal dynein complex formed at least of two heavy chains and a number of intermediate and light chains. Associated with axonemal dynein subunits such as, DNAH2, DNAI3, and DYNLT1. Interacts with DYNLT1.

Its subcellular location is the cytoplasm. It localises to the cytoskeleton. The protein localises to the flagellum axoneme. The protein resides in the cilium axoneme. It is found in the dynein axonemal particle. In terms of biological role, plays a critical role in the assembly of axonemal dynein complex, thereby playing a role in ciliary motility. This chain is Dynein axonemal intermediate chain 4, found in Homo sapiens (Human).